We begin with the raw amino-acid sequence, 227 residues long: Cytochrome c oxidase subunit 2 (227 aa).

Topologically, residues M1–S14 are mitochondrial intermembrane. Residues P15–M45 form a helical membrane-spanning segment. Over L46–Q59 the chain is Mitochondrial matrix. The helical transmembrane segment at E60 to M87 threads the bilayer. Over D88–L227 the chain is Mitochondrial intermembrane. Residues H161, C196, E198, C200, H204, and M207 each contribute to the Cu cation site. E198 is a Mg(2+) binding site.

The protein belongs to the cytochrome c oxidase subunit 2 family. As to quaternary structure, component of the cytochrome c oxidase (complex IV, CIV), a multisubunit enzyme composed of 14 subunits. The complex is composed of a catalytic core of 3 subunits MT-CO1, MT-CO2 and MT-CO3, encoded in the mitochondrial DNA, and 11 supernumerary subunits COX4I, COX5A, COX5B, COX6A, COX6B, COX6C, COX7A, COX7B, COX7C, COX8 and NDUFA4, which are encoded in the nuclear genome. The complex exists as a monomer or a dimer and forms supercomplexes (SCs) in the inner mitochondrial membrane with NADH-ubiquinone oxidoreductase (complex I, CI) and ubiquinol-cytochrome c oxidoreductase (cytochrome b-c1 complex, complex III, CIII), resulting in different assemblies (supercomplex SCI(1)III(2)IV(1) and megacomplex MCI(2)III(2)IV(2)). Found in a complex with TMEM177, COA6, COX18, COX20, SCO1 and SCO2. Interacts with TMEM177 in a COX20-dependent manner. Interacts with COX20. Interacts with COX16. Cu cation is required as a cofactor.

It localises to the mitochondrion inner membrane. The enzyme catalyses 4 Fe(II)-[cytochrome c] + O2 + 8 H(+)(in) = 4 Fe(III)-[cytochrome c] + 2 H2O + 4 H(+)(out). Component of the cytochrome c oxidase, the last enzyme in the mitochondrial electron transport chain which drives oxidative phosphorylation. The respiratory chain contains 3 multisubunit complexes succinate dehydrogenase (complex II, CII), ubiquinol-cytochrome c oxidoreductase (cytochrome b-c1 complex, complex III, CIII) and cytochrome c oxidase (complex IV, CIV), that cooperate to transfer electrons derived from NADH and succinate to molecular oxygen, creating an electrochemical gradient over the inner membrane that drives transmembrane transport and the ATP synthase. Cytochrome c oxidase is the component of the respiratory chain that catalyzes the reduction of oxygen to water. Electrons originating from reduced cytochrome c in the intermembrane space (IMS) are transferred via the dinuclear copper A center (CU(A)) of subunit 2 and heme A of subunit 1 to the active site in subunit 1, a binuclear center (BNC) formed by heme A3 and copper B (CU(B)). The BNC reduces molecular oxygen to 2 water molecules using 4 electrons from cytochrome c in the IMS and 4 protons from the mitochondrial matrix. The polypeptide is Cytochrome c oxidase subunit 2 (MT-CO2) (Damaliscus pygargus phillipsi (Blesbok)).